A 178-amino-acid polypeptide reads, in one-letter code: Large ribosomal subunit protein uL6 (178 aa).

Belongs to the universal ribosomal protein uL6 family. As to quaternary structure, part of the 50S ribosomal subunit.

In terms of biological role, this protein binds to the 23S rRNA, and is important in its secondary structure. It is located near the subunit interface in the base of the L7/L12 stalk, and near the tRNA binding site of the peptidyltransferase center. The protein is Large ribosomal subunit protein uL6 of Francisella tularensis subsp. tularensis (strain FSC 198).